Reading from the N-terminus, the 424-residue chain is GTPase Obg (424 aa).

The region spanning 2 to 158 is the Obg domain; the sequence is AKFIDQVKIM…YEANIVLKIL (157 aa). In terms of domain architecture, OBG-type G spans 159 to 326; sequence SDVGLVGLPS…LKKIIWEFLE (168 aa). GTP is bound by residues 165–172, 190–194, 211–214, 280–283, and 307–309; these read GLPSCGKS, FTTLV, DLPG, NKSD, and SAL. Positions 172 and 192 each coordinate Mg(2+). In terms of domain architecture, OCT spans 344-422; that stretch reads KEINYEPDFV…IYQHKFEWEE (79 aa).

It belongs to the TRAFAC class OBG-HflX-like GTPase superfamily. OBG GTPase family. Monomer. Requires Mg(2+) as cofactor.

It localises to the cytoplasm. Its function is as follows. An essential GTPase which binds GTP, GDP and possibly (p)ppGpp with moderate affinity, with high nucleotide exchange rates and a fairly low GTP hydrolysis rate. Plays a role in control of the cell cycle, stress response, ribosome biogenesis and in those bacteria that undergo differentiation, in morphogenesis control. This Mycoplasmopsis synoviae (strain 53) (Mycoplasma synoviae) protein is GTPase Obg.